A 167-amino-acid chain; its full sequence is Zinc finger CCCH domain-containing protein 3 (167 aa).

The C3H1-type zinc-finger motif lies at 63–91 (AAAIGVCQHFVRTGTCKFGDSCRYFHPKP). Residues 89–101 (PKPPPANPGPAPS) are compositionally biased toward pro residues. Positions 89 to 167 (PKPPPANPGP…YPPFPFVDWG (79 aa)) are disordered. A compositionally biased stretch (polar residues) spans 108–120 (MAQQSNIQGSQPN). Residues 149–167 (SLRPPPEGGYPPFPFVDWG) are compositionally biased toward pro residues.

This is Zinc finger CCCH domain-containing protein 3 from Oryza sativa subsp. japonica (Rice).